A 360-amino-acid polypeptide reads, in one-letter code: MSKQILILPGDGIGPEIMTEAVKVLELANEKYQLGFELTHDVIGGAAIDKHGVPLADETLDRARAADAVLLGAVGGPKWDTIERDIRPERGLLKIRSQLGLFGNLRPAILYPQLADASSLKPEIVAGLDILIVRELTGGIYFGAPRGTRVLDNGERQAYDTLPYSESEIRRIAKVGFDMAMVRGKKLCSVDKANVLASSQLWREIVEQVAKDYPEVELSHMYVDNAAMQLVRAPKQFDVIVTDNLFGDILSDQASMLTGSIGMLPSASLDTANKGMYEPCHGSAPDIAGKGIANPLATILSVSMMLRYSFNLTDAADAIEKAVSVVLDQGIRTGDIWSEGKVKVGTQEMGDAVVAALRNL.

76–89 (GPKWDTIERDIRPE) provides a ligand contact to NAD(+). Residues R96, R106, R134, and D224 each contribute to the substrate site. The Mg(2+) site is built by D224, D248, and D252. An NAD(+)-binding site is contributed by 282 to 294 (GSAPDIAGKGIAN).

Belongs to the isocitrate and isopropylmalate dehydrogenases family. LeuB type 1 subfamily. As to quaternary structure, homodimer. Mg(2+) is required as a cofactor. It depends on Mn(2+) as a cofactor.

The protein resides in the cytoplasm. The enzyme catalyses (2R,3S)-3-isopropylmalate + NAD(+) = 4-methyl-2-oxopentanoate + CO2 + NADH. The protein operates within amino-acid biosynthesis; L-leucine biosynthesis; L-leucine from 3-methyl-2-oxobutanoate: step 3/4. Catalyzes the oxidation of 3-carboxy-2-hydroxy-4-methylpentanoate (3-isopropylmalate) to 3-carboxy-4-methyl-2-oxopentanoate. The product decarboxylates to 4-methyl-2 oxopentanoate. This is 3-isopropylmalate dehydrogenase from Pseudomonas savastanoi pv. phaseolicola (strain 1448A / Race 6) (Pseudomonas syringae pv. phaseolicola (strain 1448A / Race 6)).